We begin with the raw amino-acid sequence, 776 residues long: Cullin-1 (776 aa).

R63 bears the Omega-N-methylarginine mark. Residues 706-766 (DRKLLIQAAI…IEKEYLERVD (61 aa)) enclose the Cullin neddylation domain. Residue K720 forms a Glycyl lysine isopeptide (Lys-Gly) (interchain with G-Cter in NEDD8) linkage.

It belongs to the cullin family. Component of multiple Cul1-RING E3 ubiquitin-protein ligase complexes commonly known as SCF (SKP1-CUL1-F-box) complexes, consisting of CUL1, SKP1, RBX1 and a variable F-box domain-containing protein as substrate-specific subunit. Component of the SCF(FBXW11) complex containing FBXW11. Component of the SCF(SKP2) complex containing SKP2, in which it interacts directly with SKP1, SKP2 and RBX1. Component of the SCF(FBXW2) complex containing FBXW2. Component of the SCF(FBXO32) complex containing FBXO32. Component of the probable SCF(FBXO7) complex containing FBXO7. Component of the SCF(FBXO10) complex containing FBXO10. Component of the SCF(FBXO11) complex containing FBXO11. Component of the SCF(FBXO25) complex containing FBXO25. Component of the SCF(FBXO33) complex containing FBXO33. Component of the probable SCF(FBXO4) complex containing FBXO4. Component of the SCF(FBXO44) complex, composed of SKP1, CUL1 and FBXO44. Component of the SCF(BTRC) complex, composed of SKP1, CUL1 and BTRC. This complex binds phosphorylated NFKBIA. Part of a SCF complex consisting of CUL1, RBX1, SKP1 and FBXO2. Component of a SCF(SKP2)-like complex containing CUL1, SKP1, TRIM21 and SKP2. Component of the SCF(FBXO17) complex, composed of SKP1, CUL1 and FBXO17. Component of the SCF(FBXO27) complex, composed of SKP1, CUL1 and FBXO27. Component of the SCF(CCNF) complex consisting of CUL1, RBX1, SKP1 and CCNF. Interacts with CCNF. Component of the SCF(FBXL3) complex composed of CUL1, SKP1, RBX1 and FBXL3. Component of the SCF(FBXL21) complex composed of CUL1, SKP1, RBX1 and FBXL21. Component of the SCF(FBXO9) composed of CUL1, SKP1, RBX1 and FBXO9. Component of the SCF(FBXW7) composed of CUL1, SKP1, RBX1 and FBXW7. Component of the SCF(FBXO31) complex composed of CUL1, SKP1, RBX1 and FBXO31. Interacts with CHEK2; mediates CHEK2 ubiquitination and regulates its function. Part of a complex with TIP120A/CAND1 and RBX1. The unneddylated form interacts with TIP120A/CAND1 and the interaction mediates the exchange of the F-box substrate-specific subunit. Can self-associate. Interacts with FBXW8. Interacts with RNF7. Interacts with TRIM21. Interacts with COPS2. Interacts with DCUN1D1 and UBE2M. Interacts with DCUN1D3. Interacts with DCUN1D4. Identified in a complex with RBX1 and GLMN. Interacts with CEP68 as part of the SCF(FBXW11) complex; the interaction is probably mediated by FBXW11 and the complex also contains CDK5RAP2 and PCNT. Interacts (when neddylated) with ARIH1; leading to activate the E3 ligase activity of ARIH1. Interacts with COPS9. Interacts with UBXN1. Interacts with KAT7, probably as part of an SCF complex; the interaction mediates KAT7 ubiquitination. Interacts with NOTCH2. Part of a complex that contains DCUN1D5, CUL1 and RBX1; this interaction is bridged by CUL1. Interacts (unneddylated form) with DCUN1D1, DCUN1D2, DCUN1D3, DCUN1D4 and DCUN1D5; these interactions promote the cullin neddylation. Interacts (via the C-terminal domain) with CUL7; the interaction seems to be mediated by FBXW8; it is likely specific to FBXW8, but not other F-box proteins. Interacts with UBR2, as part of SCF(BTRC) complex; the interaction mediates 'Lys-48'-linked ubiquitination of UBR2 and is regulated by DUSP22 in the T-cell receptor signaling pathway. As to quaternary structure, (Microbial infection) Interacts with murine cytomegalovirus M48. Post-translationally, neddylated; which enhances the ubiquitination activity of SCF. Neddylation prevents binding of the inhibitor CAND1. Neddylation leads to structural rearrangment in the complex that allows interaction between the E2 ubiquitin-conjugating enzyme and the acceptor ubiquitin. Deneddylated via its interaction with the COP9 signalosome (CSN) complex. In terms of processing, (Microbial infection) Deneddylated by murine cytomegalovirus M48 leading to a S-phase-like environment that is required for efficient replication of the viral genome. Embryo fibroblasts and embryo preadipocytes.

The protein operates within protein modification; protein ubiquitination. Core component of multiple cullin-RING-based SCF (SKP1-CUL1-F-box protein) E3 ubiquitin-protein ligase complexes, which mediate the ubiquitination of proteins involved in cell cycle progression, signal transduction and transcription. SCF complexes and ARIH1 collaborate in tandem to mediate ubiquitination of target proteins. In the SCF complex, serves as a rigid scaffold that organizes the SKP1-F-box protein and RBX1 subunits. May contribute to catalysis through positioning of the substrate and the ubiquitin-conjugating enzyme. The E3 ubiquitin-protein ligase activity of the complex is dependent on the neddylation of the cullin subunit and exchange of the substrate recognition component is mediated by TIP120A/CAND1. The functional specificity of the SCF complex depends on the F-box protein as substrate recognition component. SCF(BTRC) and SCF(FBXW11) direct ubiquitination of CTNNB1 and participate in Wnt signaling. SCF(FBXW11) directs ubiquitination of phosphorylated NFKBIA. SCF(BTRC) directs ubiquitination of NFKBIB, NFKBIE, ATF4, SMAD3, SMAD4, CDC25A, FBXO5 and probably NFKB2. SCF(BTRC) and/or SCF(FBXW11) direct ubiquitination of CEP68. SCF(SKP2) directs ubiquitination of phosphorylated CDKN1B/p27kip and is involved in regulation of G1/S transition. SCF(SKP2) directs ubiquitination of ORC1, CDT1, RBL2, ELF4, CDKN1A, RAG2, FOXO1A, and probably MYC and TAL1. SCF(FBXW7) directs ubiquitination of cyclin E, NOTCH1 released notch intracellular domain (NICD), and probably PSEN1. SCF(FBXW2) directs ubiquitination of GCM1. SCF(FBXO32) directs ubiquitination of MYOD1. SCF(FBXO7) directs ubiquitination of BIRC2 and DLGAP5. SCF(FBXO33) directs ubiquitination of YBX1. SCF(FBXO1) directs ubiquitination of BCL6 and DTL but does not seem to direct ubiquitination of TP53. SCF(BTRC) mediates the ubiquitination of NFKBIA at 'Lys-21' and 'Lys-22'; the degradation frees the associated NFKB1-RELA dimer to translocate into the nucleus and to activate transcription. SCF(CCNF) directs ubiquitination of CCP110. SCF(FBXL3) and SCF(FBXL21) direct ubiquitination of CRY1 and CRY2. SCF(FBXO9) directs ubiquitination of TTI1 and TELO2. SCF(FBXO10) directs ubiquitination of BCL2. Neddylated CUL1-RBX1 ubiquitinates p53/TP53 recruited by Cul7-RING(FBXW8) complex. SCF(BTRC) directs 'Lys-48'-linked ubiquitination of UBR2 in the T-cell receptor signaling pathway. The SCF(FBXO31) protein ligase complex specifically mediates the ubiquitination of proteins amidated at their C-terminus in response to oxidative stress. In Mus musculus (Mouse), this protein is Cullin-1 (Cul1).